A 310-amino-acid chain; its full sequence is Glycine--tRNA ligase alpha subunit (310 aa).

Belongs to the class-II aminoacyl-tRNA synthetase family. As to quaternary structure, tetramer of two alpha and two beta subunits.

The protein resides in the cytoplasm. It carries out the reaction tRNA(Gly) + glycine + ATP = glycyl-tRNA(Gly) + AMP + diphosphate. The chain is Glycine--tRNA ligase alpha subunit from Aliivibrio salmonicida (strain LFI1238) (Vibrio salmonicida (strain LFI1238)).